The primary structure comprises 283 residues: uncharacterized protein (283 aa).

3 helical membrane passes run 24–44 (LFGY…GMFI), 64–84 (TIAG…TLIA), and 96–116 (VIAI…GSLS).

It belongs to the MscS (TC 1.A.23) family.

Its subcellular location is the cell membrane. This is an uncharacterized protein from Buchnera aphidicola subsp. Schizaphis graminum (strain Sg).